A 386-amino-acid polypeptide reads, in one-letter code: N-terminal EF-hand calcium-binding protein 2 (386 aa).

An Omega-N-methylarginine modification is found at arginine 10. Arginine 42 carries the post-translational modification Asymmetric dimethylarginine. 2 consecutive EF-hand domains span residues 60 to 95 (GGTA…GVLN) and 96 to 129 (EKEL…HMGD). Ca(2+)-binding residues include aspartate 73, asparagine 75, aspartate 77, lysine 79, glutamate 84, aspartate 107, aspartate 109, threonine 111, histidine 113, and glutamate 118. Residues 170–201 (LKETANQIQSLLSSVESAVEAIEEQTSQLRQN) are a coiled coil. The ABM domain occupies 286–375 (QLVRQEMAVC…SQPEALSRIL (90 aa)).

Interacts (calcium-dependent) with ADORA2A and GRM5. In terms of tissue distribution, expressed in brain. Expressed in the spinal dorsal horn with especially strong expression in lamina IIi; found in excitory synaptic boutons and in ependymal cells (at protein level).

It is found in the cytoplasm. It localises to the cell projection. Its subcellular location is the dendrite. The protein localises to the axon. The protein resides in the cell membrane. May act as a signaling scaffold protein that senses intracellular calcium. Can modulate ligand-induced internalization of ADORA2A and coupling efficiency of mGluR5/GRM5; for both receptors may regulate signaling activity such as promoting MAPK1/3 (ERK1/2) activation. The sequence is that of N-terminal EF-hand calcium-binding protein 2 (NECAB2) from Homo sapiens (Human).